A 773-amino-acid chain; its full sequence is MSNSEPSTSTPSGKTKKRGKKCETSMGKSKKSKNLPRFVKIQPIFSSEKIKETVCEQGIEECKRMLKGHFNAIKDDYDIRVKDELDTDIKDWLKDASSSVNEYRRRLQENLGEGRTIAKFSFKNCEKYEENDYKVSDSTVTWIKPDRTEEGDLMKKFRAPCSRIEVGDISPPMIYWVPIEQSVATPDQLRLTHMPYFGDGIDDGNIYEHLIDMFPDGIHGFSDNWSYVNDWILYKLCRAALKDYQGSPDVFYYTLYRLWPNKSSQREFSSAFPVLCENFAEKGFDPSSLEPWKKTKIAEGAQNLRNPTCYACLAYTCAIHGFKAEIPIEFPNGEFYNAMLPLPNNPENDGKMCSGNCWKSVTMKEVSEVLVPDSEEILQKEVKIYFMKSRIAKMPIEDGALIVNIYVFNTYIPFCEFVKKYVDEDDEESKIRSCRDAYHLMMSMAENVSARRLKMGQPSNRLSIKDRVNNFRRNQLSQEKAKRKLRHDSLRIQALRDGLDAEKLIREDDMRDSQRNSEKVRMTAVTPITACRHAGPCNATAENCACRENGVCSYMCKCDINCSQRFPGCNCAAGQCYTKACQCYRANWECNPMTCNMCKCDAIDSNIIKCRNFGMTRMIQKRTYCGPSKIAGNGLFLLEPAEKDEFITEYTGERISDDEAERRGAIYDRYQCSYIFNIETGGAIDSYKIGNLARFANHDSKNPTCYARTMVVAGEHRIGFYAKRRLEISEELTFDYSYSGEHQIAFRMVQTKERSEKPSRPKSQKLSKPMTSE.

Polar residues predominate over residues 1-13 (MSNSEPSTSTPSG). Residues 1–33 (MSNSEPSTSTPSGKTKKRGKKCETSMGKSKKSK) form a disordered region. An interaction with mes-6 region spans residues 1-194 (MSNSEPSTST…TPDQLRLTHM (194 aa)). Residues 505 to 614 (IREDDMRDSQ…SNIIKCRNFG (110 aa)) form the CXC domain. In terms of domain architecture, SET spans 616–737 (TRMIQKRTYC…ISEELTFDYS (122 aa)). A disordered region spans residues 749–773 (VQTKERSEKPSRPKSQKLSKPMTSE). A compositionally biased stretch (basic and acidic residues) spans 750-759 (QTKERSEKPS).

This sequence belongs to the class V-like SAM-binding methyltransferase superfamily. Histone-lysine methyltransferase family. EZ subfamily. In terms of assembly, interacts directly with mes-6 via its N-terminal domain. Forms a heterotrimeric complex with mes-3 and mes-6. Does not interact with mes-4. In adults, it is predominantly expressed in the germline, and weakly expressed in intestinal cells. Expressed in the hypoderm.

It is found in the nucleus. The catalysed reaction is L-lysyl(27)-[histone H3] + 3 S-adenosyl-L-methionine = N(6),N(6),N(6)-trimethyl-L-lysyl(27)-[histone H3] + 3 S-adenosyl-L-homocysteine + 3 H(+). Polycomb group (PcG) protein. Catalytic subunit of a the mes-2/mes-3/mes-6 complex, which methylates 'Lys-27' of histone H3, leading to transcriptional repression of the affected target genes. PcG proteins act by forming multiprotein complexes, which are required to maintain the transcriptionally repressive state of homeotic genes throughout development. In association with the nfya-1-NF-Y complex, may play a role in repressing the expression of the homeobox protein egl-5 in tissues such as the head. PcG proteins are not required to initiate repression, but to maintain it during later stages of development. The mes-2/mes-3/mes-6 complex may participate in the global inactivation of the X chromosomes in germline cells. This complex is required to exclude mes-4 from the inactivated X-chromosomes in germline cells. Required for small-RNA-induced H3K27 trimethylation. Involved in the negative regulation of lifespan in a germline-independent fashion. In Caenorhabditis elegans, this protein is Histone-lysine N-methyltransferase mes-2.